Consider the following 231-residue polypeptide: Glycerol-3-phosphate acyltransferase (231 aa).

Transmembrane regions (helical) follow at residues 6-26 (FLFL…LVIG), 55-75 (WGIL…TIFL), 95-115 (LTMK…FSLF), 130-150 (IITS…AIFL), 152-172 (LFGY…IFLW), and 196-216 (LFYF…YSNI).

This sequence belongs to the PlsY family. In terms of assembly, probably interacts with PlsX.

It localises to the cell membrane. The enzyme catalyses an acyl phosphate + sn-glycerol 3-phosphate = a 1-acyl-sn-glycero-3-phosphate + phosphate. The protein operates within lipid metabolism; phospholipid metabolism. In terms of biological role, catalyzes the transfer of an acyl group from acyl-phosphate (acyl-PO(4)) to glycerol-3-phosphate (G3P) to form lysophosphatidic acid (LPA). This enzyme utilizes acyl-phosphate as fatty acyl donor, but not acyl-CoA or acyl-ACP. This is Glycerol-3-phosphate acyltransferase from Aster yellows witches'-broom phytoplasma (strain AYWB).